The sequence spans 144 residues: Ribosomally synthesized cyclic peptide phomopsin precursor phomA' (144 aa).

The signal sequence occupies residues methionine 1–alanine 18. 9 consecutive propeptides follow at residues alanine 19 to aspartate 35, lysine 42 to aspartate 50, lysine 57 to aspartate 65, lysine 72 to aspartate 79, lysine 86 to aspartate 94, lysine 101 to aspartate 108, lysine 115 to aspartate 123, lysine 130 to aspartate 137, and lysine 144.

Post-translationally, phomA' is processed by several endopeptidases including kexin proteases as well as the cluster-specific S41 family peptidase phomP1' and the peptidase phomG' to produce 5 identical copies of the hexapeptide Tyr-Val-Ile-Pro-Ile-Asp and 3 identical copies of Tyr-Val-Ile-Pro-Phe-Asp, that are further modified into phomapsins A and P, respectively. The timing and order of proteolysis of the phomA' precursor and PTMs are still unknown. Two tyrosinase-like enzyme phomQ1' and PhomQ2, catalyze the chlorination and hydroxylation of Tyr, respectively. PhomYb', is proposed to be involved in the construction of the macrocyclic structure. The other four ustYa family proteins may be involved in PTMs that generate the unique structure of phomopsin A. PhomYa' is required for the hydroxylation of C-beta of Tyr. PhomYc', PhomYd', and PhomYe' are responsible for the biosynthesis of 2,3-dehydroisoleucine (dIle), 2,3-dehydroaspartic acid (dAsp), and 3,4-dehydroproline (dPro), respectively. While dIle formation by phomYc is indispensable for the installation of dAsp by phomYd, the order of the other PTMs have not been elucidated yet. Most of the biosynthetic enzymes likely have broad substrate specificity, and thus, there might be a metabolic grid from a precursor to phomopsin A. The enzyme(s) responsible for the biosynthesis of 3,4-dehydrovaline (dVal) have also not been identified yet. Finally, PhomM' acts as an S-adenosylmethionine-dependent alpha-N-methyltransferase that catalyzes two successive N-methylation reactions, converting N-desmethyl-phomopsin A to phomopsin A and phomopsin A further to an N,N-dimethylated congener called phomopsin E.

Its pathway is mycotoxin biosynthesis. Its function is as follows. Ribosomally synthesized cyclic peptide phomopsin precursor; part of the gene cluster that mediates the biosynthesis of the phomopsins, a group of hexapeptide mycotoxins which infects lupins and causes lupinosis disease in livestock. The phomA' translated product contains a 5-fold repeated peptide embedding the hexapeptide Tyr-Val-Ile-Pro-Ile-Asp and a 3-fold repeated peptide embedding the hexapeptide Tyr-Val-Ile-Pro-Phe-Asp, that is converted into phomapsin A and phomapsin P, respectively. After being excised from the precursor peptide by kexin proteases, the core peptides are cyclized and modified post-translationally by enzymes encoded within the corresponding gene cluster. The polypeptide is Ribosomally synthesized cyclic peptide phomopsin precursor phomA' (Diaporthe leptostromiformis (Lupinosis disease fungus)).